Here is a 541-residue protein sequence, read N- to C-terminus: Cilia- and flagella-associated protein 97 (541 aa).

Phosphoserine occurs at positions 8 and 19. Disordered regions lie at residues 28–47 (ESNS…GINK), 93–296 (ERKA…KQEN), 313–337 (RCVK…VLDA), 406–430 (LSRQ…PPKL), and 495–514 (HYSP…GLSC). Composition is skewed to basic and acidic residues over residues 35-47 (KQND…GINK), 93-107 (ERKA…HIEN), and 142-151 (RIPKIVKGED). The segment covering 152–161 (DYYTDGEESS) has biased composition (acidic residues). T155 is modified (phosphothreonine). Phosphoserine occurs at positions 160 and 161. Over residues 176–201 (SSNLKKNVSKKYSSSSLSSSSSRSNS) the composition is skewed to low complexity. A compositionally biased stretch (basic and acidic residues) spans 207-218 (GSDRQRRSESHS). 2 stretches are compositionally biased toward polar residues: residues 219–232 (SGKC…SSPK) and 240–250 (KSSAQPSSTKQ). The residue at position 230 (S230) is a Phosphoserine. A Phosphoserine modification is found at S258. Over residues 267 to 277 (PLSTPDVSPAQ) the composition is skewed to polar residues. The segment covering 287–296 (QKVKVKKQEN) has biased composition (basic and acidic residues). The stretch at 382 to 459 (RKNYSFTREE…ALLKRLEAVK (78 aa)) forms a coiled coil. Polar residues predominate over residues 503 to 513 (SRTSSATSGLS).

This sequence belongs to the CFAP97 family. As to expression, highly expressed in testis with lower levels detected in other tissues including lung, heart and kidney.

The sequence is that of Cilia- and flagella-associated protein 97 from Mus musculus (Mouse).